Here is a 320-residue protein sequence, read N- to C-terminus: MADPYEFLMCIHNPEEDTLTRNFPIPATPLDQNTKDISLNPDRKTSLRIFRPPTKEPPVTKNKLLPIIIYFHGGGFILFNADSTMNHDFCQSIATHIPALVVSVDYRLAPENRLPAAYDDAVDALNWVKDQGLGKLNNSEVWLKEYGDFSKCFIMGCSSGANVAYHASLRAIEMDLEPAKINGLILHCPFFGSLERTESDSKVINNQDLPLAVRDVMWELALPLGSTRDHVYCNPNIDHDGSSSGNMVGLIERCFVVGFYGDPLIDRQIQLVKMLEEKGVKVETWIEQGGYHGVLCFDPMIRETFLEKLKHFILNDEFIY.

Residues 72–74 carry the Involved in the stabilization of the negatively charged intermediate by the formation of the oxyanion hole motif; it reads HGG. Residues Ser158, Asp262, and His292 contribute to the active site.

Belongs to the 'GDXG' lipolytic enzyme family.

The enzyme catalyses 3-O-acetylpapaveroxine + H2O = narcotine hemiacetal + acetate + H(+). It participates in alkaloid biosynthesis. Functionally, carboxylesterase involved in the biosynthesis of the benzylisoquinoline alkaloid noscapine. Converts 3-O-acetylpapaveroxine to papaveroxine which spontaneously rearranges to narcotine hemiacetal. The sequence is that of 3-O-acetylpapaveroxine carboxylesterase CXE1 from Papaver somniferum (Opium poppy).